A 102-amino-acid chain; its full sequence is Iron-sulfur cluster assembly protein CyaY (102 aa).

The protein belongs to the frataxin family.

Its function is as follows. Involved in iron-sulfur (Fe-S) cluster assembly. May act as a regulator of Fe-S biogenesis. This chain is Iron-sulfur cluster assembly protein CyaY, found in Pasteurella multocida (strain Pm70).